A 410-amino-acid chain; its full sequence is 2,3-bisphosphoglycerate-independent phosphoglycerate mutase (410 aa).

It belongs to the BPG-independent phosphoglycerate mutase family. A-PGAM subfamily.

The enzyme catalyses (2R)-2-phosphoglycerate = (2R)-3-phosphoglycerate. It functions in the pathway carbohydrate degradation; glycolysis; pyruvate from D-glyceraldehyde 3-phosphate: step 3/5. In terms of biological role, catalyzes the interconversion of 2-phosphoglycerate and 3-phosphoglycerate. The chain is 2,3-bisphosphoglycerate-independent phosphoglycerate mutase from Pyrococcus abyssi (strain GE5 / Orsay).